Consider the following 260-residue polypeptide: Ribose-5-phosphate isomerase A (260 aa).

Substrate-binding positions include 33–36, 89–92, and 102–105; these read TGST, DGAD, and KGGG. The active-site Proton acceptor is the E111. K129 is a binding site for substrate.

Belongs to the ribose 5-phosphate isomerase family. Homodimer.

It carries out the reaction aldehydo-D-ribose 5-phosphate = D-ribulose 5-phosphate. Its pathway is carbohydrate degradation; pentose phosphate pathway; D-ribose 5-phosphate from D-ribulose 5-phosphate (non-oxidative stage): step 1/1. Functionally, catalyzes the reversible conversion of ribose-5-phosphate to ribulose 5-phosphate. This is Ribose-5-phosphate isomerase A from Dinoroseobacter shibae (strain DSM 16493 / NCIMB 14021 / DFL 12).